Here is a 904-residue protein sequence, read N- to C-terminus: Protein translocase subunit SecA (904 aa).

ATP contacts are provided by residues Gln89, Gly107–Thr111, and Asp502. Cys888, Cys890, Cys899, and His900 together coordinate Zn(2+).

Belongs to the SecA family. In terms of assembly, monomer and homodimer. Part of the essential Sec protein translocation apparatus which comprises SecA, SecYEG and auxiliary proteins SecDF-YajC and YidC. Requires Zn(2+) as cofactor.

The protein resides in the cell inner membrane. The protein localises to the cytoplasm. The enzyme catalyses ATP + H2O + cellular proteinSide 1 = ADP + phosphate + cellular proteinSide 2.. Part of the Sec protein translocase complex. Interacts with the SecYEG preprotein conducting channel. Has a central role in coupling the hydrolysis of ATP to the transfer of proteins into and across the cell membrane, serving both as a receptor for the preprotein-SecB complex and as an ATP-driven molecular motor driving the stepwise translocation of polypeptide chains across the membrane. This Roseobacter denitrificans (strain ATCC 33942 / OCh 114) (Erythrobacter sp. (strain OCh 114)) protein is Protein translocase subunit SecA.